We begin with the raw amino-acid sequence, 677 residues long: WD repeat-containing protein 48 (677 aa).

WD repeat units follow at residues 28–67, 73–112, 115–154, 166–205, 208–247, 250–289, 292–334, and 358–397; these read YNRN…QDPY, HHTD…CMST, THKD…ALTA, GNKD…KLMK, GHTD…CIAT, VHDE…MRVL, EEKA…NFRA, and KGGT…KGED. The interval 611–632 is disordered; sequence SQATSSSANDKPGEQEKEEDVS.

This sequence belongs to the WD repeat WDR48 family.

Its subcellular location is the nucleus. The protein localises to the cytoplasm. It is found in the lysosome. The protein resides in the late endosome. Functionally, regulator of deubiquitinating complexes, which acts as a strong activator of usp1, usp12 and usp46. Enhances the usp1-mediated deubiquitination of fancd2; usp1 being almost inactive by itself. Activates deubiquitination by increasing the catalytic turnover without increasing the affinity of deubiquitinating enzymes for the substrate. Also activates deubiquitinating activity of complexes containing usp12. Together with rad51ap1, promotes DNA repair by stimulating rad51-mediated homologous recombination. Binds single-stranded DNA (ssDNA) and double-stranded DNA (dsDNA). DNA-binding is required both for usp1-mediated deubiquitination of fancd2 and stimulation of rad51-mediated homologous recombination: both wdr48/uaf1 and rad51ap1 have coordinated role in DNA-binding during these processes. Together with atad5 and by regulating usp1 activity, has a role in pcna-mediated translesion synthesis (TLS) by deubiquitinating monoubiquitinated pcna. Together with atad5, has a role in recruiting rad51 to stalled forks during replication stress. The protein is WD repeat-containing protein 48 (wdr48) of Danio rerio (Zebrafish).